The primary structure comprises 145 residues: UPF0201 protein SSO1042 (145 aa).

The protein belongs to the UPF0201 family.

This is UPF0201 protein SSO1042 from Saccharolobus solfataricus (strain ATCC 35092 / DSM 1617 / JCM 11322 / P2) (Sulfolobus solfataricus).